Consider the following 210-residue polypeptide: Thymidylate kinase (210 aa).

10–17 (GPEGAGKS) is a binding site for ATP.

Belongs to the thymidylate kinase family.

The enzyme catalyses dTMP + ATP = dTDP + ADP. Phosphorylation of dTMP to form dTDP in both de novo and salvage pathways of dTTP synthesis. This is Thymidylate kinase from Pseudomonas paraeruginosa (strain DSM 24068 / PA7) (Pseudomonas aeruginosa (strain PA7)).